The following is a 231-amino-acid chain: Augmin complex subunit dgt2 (231 aa).

Residues 128-199 (QEADLSCDQK…VQTKAELLRG (72 aa)) adopt a coiled-coil conformation.

As to quaternary structure, component of the augmin complex composed of dgt2, dgt3, dgt4, dgt5, dgt6, msd1, msd5 and wac. The complex interacts directly or indirectly with microtubules and is required for centrosome-independent generation of spindle microtubules. dgt2 interacts directly with wac (via coiled coil). As to expression, in adult females, detected only in the abdomen with no expression in the head or thorax (at protein level).

It localises to the cytoplasm. Its subcellular location is the cytoskeleton. The protein localises to the spindle. It is found in the spindle pole. Functionally, as part of the augmin complex, plays a role in centrosome-independent generation of spindle microtubules. The complex is required for mitotic spindle assembly through its involvement in localizing gamma-tubulin to spindle microtubules. dgt2 binds to microtubules in vitro. The polypeptide is Augmin complex subunit dgt2 (Drosophila melanogaster (Fruit fly)).